Here is a 477-residue protein sequence, read N- to C-terminus: V-type ATP synthase beta chain (477 aa).

It belongs to the ATPase alpha/beta chains family.

Produces ATP from ADP in the presence of a proton gradient across the membrane. The V-type beta chain is a regulatory subunit. In Anaeromyxobacter sp. (strain K), this protein is V-type ATP synthase beta chain.